Here is a 380-residue protein sequence, read N- to C-terminus: Phospho-N-acetylmuramoyl-pentapeptide-transferase (380 aa).

The next 11 helical transmembrane spans lie at 26–46 (IVAA…IFIE), 75–95 (MGGA…ADLA), 98–118 (FVWA…TDDW), 135–155 (LVLQ…DWRF), 161–181 (FPWV…FVPS), 183–203 (LFNP…VIAT), 222–242 (VVSA…IAGF), 259–279 (LGVF…YNTY), 283–303 (VFMG…MAVL), 311–331 (AILH…VWSF), and 357–377 (KIIV…LLSI).

The protein belongs to the glycosyltransferase 4 family. MraY subfamily. It depends on Mg(2+) as a cofactor.

It localises to the cell inner membrane. The enzyme catalyses UDP-N-acetyl-alpha-D-muramoyl-L-alanyl-gamma-D-glutamyl-meso-2,6-diaminopimeloyl-D-alanyl-D-alanine + di-trans,octa-cis-undecaprenyl phosphate = di-trans,octa-cis-undecaprenyl diphospho-N-acetyl-alpha-D-muramoyl-L-alanyl-D-glutamyl-meso-2,6-diaminopimeloyl-D-alanyl-D-alanine + UMP. The protein operates within cell wall biogenesis; peptidoglycan biosynthesis. Its function is as follows. Catalyzes the initial step of the lipid cycle reactions in the biosynthesis of the cell wall peptidoglycan: transfers peptidoglycan precursor phospho-MurNAc-pentapeptide from UDP-MurNAc-pentapeptide onto the lipid carrier undecaprenyl phosphate, yielding undecaprenyl-pyrophosphoryl-MurNAc-pentapeptide, known as lipid I. This Anaeromyxobacter dehalogenans (strain 2CP-1 / ATCC BAA-258) protein is Phospho-N-acetylmuramoyl-pentapeptide-transferase.